The following is a 194-amino-acid chain: Histone H1.0 (194 aa).

Met1 bears the N-acetylmethionine mark. The segment covering 1–11 (MTENSTSTPAA) has biased composition (low complexity). The tract at residues 1–29 (MTENSTSTPAAKPKRAKASKKSTDHPKYS) is disordered. Thr2 carries the N-acetylthreonine; in Histone H1.0, N-terminally processed modification. The H15 domain maps to 24 to 97 (DHPKYSDMIV…GASGSFRLAK (74 aa)). Arg42 carries the citrulline modification. The segment at 83 to 194 (QTKGVGASGS…SSAKRTGKKK (112 aa)) is disordered. At Ser104 the chain carries ADP-ribosylserine. The segment covering 105 to 194 (VAFKKTKKEV…SSAKRTGKKK (90 aa)) has biased composition (basic residues).

It belongs to the histone H1/H5 family. ADP-ribosylated on Ser-104 in response to DNA damage.

It localises to the nucleus. The protein localises to the chromosome. Histones H1 are necessary for the condensation of nucleosome chains into higher-order structures. The histones H1.0 are found in cells that are in terminal stages of differentiation or that have low rates of cell division. The chain is Histone H1.0 (H1-0) from Bos taurus (Bovine).